We begin with the raw amino-acid sequence, 89 residues long: Small ribosomal subunit protein uS15 (89 aa).

Belongs to the universal ribosomal protein uS15 family. In terms of assembly, part of the 30S ribosomal subunit. Forms a bridge to the 50S subunit in the 70S ribosome, contacting the 23S rRNA.

In terms of biological role, one of the primary rRNA binding proteins, it binds directly to 16S rRNA where it helps nucleate assembly of the platform of the 30S subunit by binding and bridging several RNA helices of the 16S rRNA. Functionally, forms an intersubunit bridge (bridge B4) with the 23S rRNA of the 50S subunit in the ribosome. The protein is Small ribosomal subunit protein uS15 of Oceanobacillus iheyensis (strain DSM 14371 / CIP 107618 / JCM 11309 / KCTC 3954 / HTE831).